A 216-amino-acid chain; its full sequence is Peptide deformylase (216 aa).

Positions 134 and 178 each coordinate Fe cation. Glutamate 179 is a catalytic residue. Histidine 182 lines the Fe cation pocket.

It belongs to the polypeptide deformylase family. It depends on Fe(2+) as a cofactor.

The enzyme catalyses N-terminal N-formyl-L-methionyl-[peptide] + H2O = N-terminal L-methionyl-[peptide] + formate. Functionally, removes the formyl group from the N-terminal Met of newly synthesized proteins. Requires at least a dipeptide for an efficient rate of reaction. N-terminal L-methionine is a prerequisite for activity but the enzyme has broad specificity at other positions. This Mycoplasma pneumoniae (strain ATCC 29342 / M129 / Subtype 1) (Mycoplasmoides pneumoniae) protein is Peptide deformylase.